Consider the following 325-residue polypeptide: Beta-ketoacyl-[acyl-carrier-protein] synthase III (325 aa).

Catalysis depends on residues cysteine 112 and histidine 250. The segment at 251-255 is ACP-binding; that stretch reads QANSR. Asparagine 280 is an active-site residue.

It belongs to the thiolase-like superfamily. FabH family. In terms of assembly, homodimer.

It localises to the cytoplasm. The catalysed reaction is malonyl-[ACP] + acetyl-CoA + H(+) = 3-oxobutanoyl-[ACP] + CO2 + CoA. The protein operates within lipid metabolism; fatty acid biosynthesis. Its function is as follows. Catalyzes the condensation reaction of fatty acid synthesis by the addition to an acyl acceptor of two carbons from malonyl-ACP. Catalyzes the first condensation reaction which initiates fatty acid synthesis and may therefore play a role in governing the total rate of fatty acid production. Possesses both acetoacetyl-ACP synthase and acetyl transacylase activities. Its substrate specificity determines the biosynthesis of branched-chain and/or straight-chain of fatty acids. The sequence is that of Beta-ketoacyl-[acyl-carrier-protein] synthase III from Lactococcus lactis subsp. cremoris (strain SK11).